Here is a 229-residue protein sequence, read N- to C-terminus: Enolase-phosphatase E1 (229 aa).

The disordered stretch occupies residues 207–229 (RDPASHHPQVQRFDDIHPEQIPA). The span at 218-229 (RFDDIHPEQIPA) shows a compositional bias: basic and acidic residues.

The protein belongs to the HAD-like hydrolase superfamily. MasA/MtnC family. In terms of assembly, monomer. The cofactor is Mg(2+).

It carries out the reaction 5-methylsulfanyl-2,3-dioxopentyl phosphate + H2O = 1,2-dihydroxy-5-(methylsulfanyl)pent-1-en-3-one + phosphate. Its pathway is amino-acid biosynthesis; L-methionine biosynthesis via salvage pathway; L-methionine from S-methyl-5-thio-alpha-D-ribose 1-phosphate: step 3/6. It participates in amino-acid biosynthesis; L-methionine biosynthesis via salvage pathway; L-methionine from S-methyl-5-thio-alpha-D-ribose 1-phosphate: step 4/6. Its function is as follows. Bifunctional enzyme that catalyzes the enolization of 2,3-diketo-5-methylthiopentyl-1-phosphate (DK-MTP-1-P) into the intermediate 2-hydroxy-3-keto-5-methylthiopentenyl-1-phosphate (HK-MTPenyl-1-P), which is then dephosphorylated to form the acireductone 1,2-dihydroxy-3-keto-5-methylthiopentene (DHK-MTPene). The chain is Enolase-phosphatase E1 from Klebsiella pneumoniae subsp. pneumoniae (strain ATCC 700721 / MGH 78578).